Consider the following 172-residue polypeptide: Signal peptidase complex catalytic subunit sec11 (172 aa).

Residues 1-14 (MLSFLQNPRQAAAQ) lie on the Cytoplasmic side of the membrane. Residues 15–35 (VLNFALILSTAFMMWKGLSVA) form a helical; Signal-anchor for type II membrane protein membrane-spanning segment. The Lumenal portion of the chain corresponds to 36–172 (SDSPSPIVVV…MGLVVVLQRE (137 aa)). Active-site charge relay system residues include Ser-49, His-90, and Asp-115. The tract at residues 158 to 169 (VMLGMMGLVVVL) is C-terminal short (CTS) helix.

Belongs to the peptidase S26B family. As to quaternary structure, component of the signal peptidase complex (SPC) composed of a catalytic subunit SEC11 and three accessory subunits SPC1, SPC2 and SPC3. The complex induces a local thinning of the ER membrane which is used to measure the length of the signal peptide (SP) h-region of protein substrates. This ensures the selectivity of the complex towards h-regions shorter than 18-20 amino acids. SPC associates with the translocon complex.

Its subcellular location is the endoplasmic reticulum membrane. The catalysed reaction is Cleavage of hydrophobic, N-terminal signal or leader sequences from secreted and periplasmic proteins.. Its function is as follows. Catalytic component of the signal peptidase complex (SPC) which catalyzes the cleavage of N-terminal signal sequences from nascent proteins as they are translocated into the lumen of the endoplasmic reticulum. Specifically cleaves N-terminal signal peptides that contain a hydrophobic alpha-helix (h-region) shorter than 18-20 amino acids. In Sclerotinia sclerotiorum (strain ATCC 18683 / 1980 / Ss-1) (White mold), this protein is Signal peptidase complex catalytic subunit sec11 (sec11).